Here is a 518-residue protein sequence, read N- to C-terminus: Glutamate--cysteine ligase (518 aa).

It belongs to the glutamate--cysteine ligase type 1 family. Type 1 subfamily.

The enzyme catalyses L-cysteine + L-glutamate + ATP = gamma-L-glutamyl-L-cysteine + ADP + phosphate + H(+). It functions in the pathway sulfur metabolism; glutathione biosynthesis; glutathione from L-cysteine and L-glutamate: step 1/2. The polypeptide is Glutamate--cysteine ligase (Shigella sonnei (strain Ss046)).